The sequence spans 284 residues: Bifunctional protein FolD (284 aa).

Residues 165 to 167, Thr192, and Val233 each bind NADP(+); that span reads GRG.

This sequence belongs to the tetrahydrofolate dehydrogenase/cyclohydrolase family. Homodimer.

The catalysed reaction is (6R)-5,10-methylene-5,6,7,8-tetrahydrofolate + NADP(+) = (6R)-5,10-methenyltetrahydrofolate + NADPH. It catalyses the reaction (6R)-5,10-methenyltetrahydrofolate + H2O = (6R)-10-formyltetrahydrofolate + H(+). It participates in one-carbon metabolism; tetrahydrofolate interconversion. Catalyzes the oxidation of 5,10-methylenetetrahydrofolate to 5,10-methenyltetrahydrofolate and then the hydrolysis of 5,10-methenyltetrahydrofolate to 10-formyltetrahydrofolate. This is Bifunctional protein FolD from Corynebacterium efficiens (strain DSM 44549 / YS-314 / AJ 12310 / JCM 11189 / NBRC 100395).